A 210-amino-acid chain; its full sequence is Histone H1A (210 aa).

2 disordered regions span residues 1 to 49 (MAEA…VSEQ) and 101 to 210 (KGSG…PKKK). Low complexity-rich tracts occupy residues 26-45 (KKAA…SGPS) and 129-142 (PLAA…AAAK). The 72-residue stretch at 42 to 113 (SGPSVSEQIV…GASGSFKLNK (72 aa)) folds into the H15 domain. Composition is skewed to basic residues over residues 143 to 153 (KTAKSPKKPKK) and 160 to 180 (SPKK…KTAV). Residues 181–192 (KPKVAAKSPAKA) are compositionally biased toward low complexity. Basic residues predominate over residues 193–210 (KAAKPKVAKAKKAAPKKK).

This sequence belongs to the histone H1/H5 family.

It is found in the nucleus. The protein localises to the chromosome. Its function is as follows. Histones H1 are necessary for the condensation of nucleosome chains into higher-order structures. This chain is Histone H1A, found in Xenopus laevis (African clawed frog).